The following is a 353-amino-acid chain: Tetraacyldisaccharide 4'-kinase (353 aa).

66 to 73 is an ATP binding site; sequence TVGGTGKT.

It belongs to the LpxK family.

It carries out the reaction a lipid A disaccharide + ATP = a lipid IVA + ADP + H(+). It participates in glycolipid biosynthesis; lipid IV(A) biosynthesis; lipid IV(A) from (3R)-3-hydroxytetradecanoyl-[acyl-carrier-protein] and UDP-N-acetyl-alpha-D-glucosamine: step 6/6. Transfers the gamma-phosphate of ATP to the 4'-position of a tetraacyldisaccharide 1-phosphate intermediate (termed DS-1-P) to form tetraacyldisaccharide 1,4'-bis-phosphate (lipid IVA). This chain is Tetraacyldisaccharide 4'-kinase, found in Geobacter sulfurreducens (strain ATCC 51573 / DSM 12127 / PCA).